Here is a 284-residue protein sequence, read N- to C-terminus: Transcription factor lir-3 (284 aa).

Residues 50–60 (EPRISRDELRE) show a composition bias toward basic and acidic residues. The disordered stretch occupies residues 50–71 (EPRISRDELRETASSPVTFETR). A C2H2-type zinc finger spans residues 224-247 (YKCKQCDYLDYRKSTMRKHTVSQH).

Expressed in FLP neurons.

Its subcellular location is the nucleus. Functionally, positively regulates the RNA polymerase III-associated transcription of small non-coding RNAs. In Caenorhabditis elegans, this protein is Transcription factor lir-3.